A 678-amino-acid polypeptide reads, in one-letter code: MNFSVLPPEINSALMFAGAGPGPMLAAASAWTGLAGDLGSAAASFSAVTSQLATGSWQGPASAAMTGVAASYARWLTTAAAQAEQAAGQAQAAVSAFEAALAATVHPGAVSANRGRLRSLVASNLLGQNAPAIAAVEAVYEQMWAADVAAMLGYHGEASAVALSLTPFTPSPSAAATPGGAVIIAGFPFLDLGNVTIGGFNLASGNLGLGNLGSFNPGSANTGSVNLGNANIGDLNLGSGNIGSYNLGGGNTGDLNPDSGNTGTLNWGSGNIGSYNLGGGNLGSYNLGSGNTGDTNFGGGNTGNLNVGGGNTGNSNFGFGNTGNVNFGNGNTGDTNFGSGNLGSGNIGFGNKGSHNIGFGNSGNNNIGFGLTGDNQIGFGALNSGSGNLGFGNSGNGNIGFFNSGNNNIGMGNSGNGVGALSVEFGSSAERSSGFGNSGELSTGIGNSGQLSTGWFNSATTSTGWFNSGTTNTGWFNSGTTNTGIGNSGGNLVTGSMGLFNSGHTNTGSFNAGSMNTGDFNSGNVNTGYFNSGNINTGFFNSGDLNTGLFNSVNQPVQNSGWLHTGTNNSGYANAGTFNSGFDNNARDEHAEFVTGNSGLANVGNYNAGIINVGDHLSGFRNSVPTITGTANISGFVNAGTSISGFFNFGSLMSGFANFDDEVSGYLNGDSRASGWIH.

A run of 2 helical transmembrane segments spans residues 14–34 (LMFAGAGPGPMLAAASAWTGL) and 180–200 (GAVIIAGFPFLDLGNVTIGGF).

The protein belongs to the mycobacterial PPE family.

The protein localises to the cell membrane. This is an uncharacterized protein from Mycobacterium tuberculosis (strain ATCC 25618 / H37Rv).